The chain runs to 1011 residues: Poly [ADP-ribose] polymerase 1 (1011 aa).

2 consecutive PARP-type zinc fingers follow at residues Y9 to A91 and F113 to K203. 8 residues coordinate Zn(2+): C21, C24, H53, C56, C125, C128, H159, and C162. The disordered stretch occupies residues Q198–K235. Short sequence motifs (nuclear localization signal) lie at residues K207–K209 and K220–K225. Residues R224–P358 enclose the PADR1 zinc-binding domain. A compositionally biased stretch (basic and acidic residues) spans K225–K235. Residues G289–D331 form a zinc ribbon region. C294, C297, C310, and C320 together coordinate Zn(2+). Residues E359–T378 form a disordered region. Residues A371–L522 are automodification domain. The 92-residue stretch at P382–H473 folds into the BRCT domain. PolyADP-ribosyl glutamic acid is present on residues E403, E404, E410, E411, E432, E434, E441, E442, E453, E454, E468, E481, E485, E488, E509, E510, and E517. The interval S496–K519 is disordered. The span at K506 to K519 shows a compositional bias: basic and acidic residues. One can recognise a WGR domain in the interval S539–F635. The 118-residue stretch at K659–R776 folds into the PARP alpha-helical domain. Residues D785–W1011 form the PARP catalytic domain. Residues H859–S861, G868, R875, and S901 contribute to the NAD(+) site. The active-site For poly [ADP-ribose] polymerase activity is the E985.

Belongs to the ARTD/PARP family. As to quaternary structure, homodimer; PARP-type zinc-fingers from separate parp1 molecules form a dimer module that specifically recognizes DNA strand breaks. Poly-ADP-ribosylated on serine, glutamate and aspartate residues by autocatalysis. Auto-ADP-ribosylation on serine takes place following interaction with HPF1. Auto poly-ADP-ribosylation on serine residues promotes its dissociation from chromatin.

It localises to the chromosome. Its subcellular location is the nucleus. The protein resides in the nucleolus. The protein localises to the cytoplasm. It is found in the cytosol. The enzyme catalyses NAD(+) + (ADP-D-ribosyl)n-acceptor = nicotinamide + (ADP-D-ribosyl)n+1-acceptor + H(+).. It carries out the reaction L-seryl-[protein] + NAD(+) = O-(ADP-D-ribosyl)-L-seryl-[protein] + nicotinamide + H(+). It catalyses the reaction L-aspartyl-[protein] + NAD(+) = 4-O-(ADP-D-ribosyl)-L-aspartyl-[protein] + nicotinamide. The catalysed reaction is L-glutamyl-[protein] + NAD(+) = 5-O-(ADP-D-ribosyl)-L-glutamyl-[protein] + nicotinamide. The enzyme catalyses L-tyrosyl-[protein] + NAD(+) = O-(ADP-D-ribosyl)-L-tyrosyl-[protein] + nicotinamide + H(+). It carries out the reaction L-histidyl-[protein] + NAD(+) = N(tele)-(ADP-D-ribosyl)-L-histidyl-[protein] + nicotinamide + H(+). Its activity is regulated as follows. ADP-ribosyltransferase activity is regulated via an allosteric activation mechanism. In absence of activation signal, parp1 is autoinhibited by the PARP alpha-helical domain (also named HD region), which prevents effective NAD(+)-binding. Activity is highly stimulated by signals, such as DNA strand breaks. Binding to damaged DNA unfolds the PARP alpha-helical domain, relieving autoinhibition. Poly-ADP-ribosyltransferase activity is tightly regulated and parp1 is removed from damaged chromatin following initial poly-ADP-ribosylation of chromatin to avoid prolonged residence (trapping) that has cytotoxic consequences. A number of factors or post-translational modifications (auto-poly-ADP-ribosylation) promote parp1 removal from chromatin. In terms of biological role, poly-ADP-ribosyltransferase that mediates poly-ADP-ribosylation of proteins and plays a key role in DNA repair. Mediates glutamate, aspartate, serine, histidine or tyrosine ADP-ribosylation of proteins: the ADP-D-ribosyl group of NAD(+) is transferred to the acceptor carboxyl group of target residues and further ADP-ribosyl groups are transferred to the 2'-position of the terminal adenosine moiety, building up a polymer with an average chain length of 20-30 units. Serine ADP-ribosylation of proteins constitutes the primary form of ADP-ribosylation of proteins in response to DNA damage. Specificity for the different amino acids is conferred by interacting factors, such as hpf1 and nmnat1. Following interaction with hpf1, catalyzes serine ADP-ribosylation of target proteins; hpf1 confers serine specificity by completing the parp1 active site. Also catalyzes tyrosine ADP-ribosylation of target proteins following interaction with hpf1. Following interaction with nmnat1, catalyzes glutamate and aspartate ADP-ribosylation of target proteins; nmnat1 confers glutamate and aspartate specificity. Parp1 initiates the repair of DNA breaks: recognizes and binds DNA breaks within chromatin and recruits hpf1, licensing serine ADP-ribosylation of target proteins, such as histones (H2BS6ADPr and H3S10ADPr), thereby promoting decompaction of chromatin and the recruitment of repair factors leading to the reparation of DNA strand breaks. In addition to base excision repair (BER) pathway, also involved in double-strand breaks (DSBs) repair. Mediates the poly-ADP-ribosylation of a number of proteins. In addition to proteins, also able to ADP-ribosylate DNA: catalyzes ADP-ribosylation of DNA strand break termini containing terminal phosphates and a 2'-OH group in single- and double-stranded DNA, respectively. Parp1-mediated DNA repair in neurons plays a role in sleep: senses DNA damage in neurons and promotes sleep, facilitating efficient DNA repair. In addition to DNA repair, also involved in other processes, such as transcription regulation, programmed cell death, membrane repair, adipogenesis and innate immunity. Acts as a repressor of transcription: binds to nucleosomes and modulates chromatin structure in a manner similar to histone H1, thereby altering RNA polymerase II. Acts both as a positive and negative regulator of transcription elongation, depending on the context. Poly-ADP-ribose chains generated by parp1 also play a role in poly-ADP-ribose-dependent cell death, a process named parthanatos. Also acts as a negative regulator of the cGAS-STING pathway by mediating poly-ADP-ribosylation and inactivation of cgas. Acts as a negative regulator of adipogenesis by catalyzing poly ADP-ribosylation of histone H2B on 'Glu-35' (H2BE35ADPr). The sequence is that of Poly [ADP-ribose] polymerase 1 (PARP1) from Gallus gallus (Chicken).